A 170-amino-acid polypeptide reads, in one-letter code: Probable chorismate pyruvate-lyase (170 aa).

Residues arginine 77, leucine 114, and glutamate 157 each coordinate substrate.

The protein belongs to the UbiC family.

Its subcellular location is the cytoplasm. It carries out the reaction chorismate = 4-hydroxybenzoate + pyruvate. Its pathway is cofactor biosynthesis; ubiquinone biosynthesis. Its function is as follows. Removes the pyruvyl group from chorismate, with concomitant aromatization of the ring, to provide 4-hydroxybenzoate (4HB) for the ubiquinone pathway. In Pasteurella multocida (strain Pm70), this protein is Probable chorismate pyruvate-lyase.